The primary structure comprises 2372 residues: NBAS subunit of NRZ tethering complex (2372 aa).

WD repeat units follow at residues 119–158 (DPNPHWRRVAWSHDCALLAYADSTGTVRVFDLMGSELFII) and 304–343 (GEQDGVFRMSLSPDGTILAVIHFSGSLSLWDIPSFKLRGS). The interval 447–468 (LESSVKGEEDDGDDDSDSDEEA) is disordered. A compositionally biased stretch (acidic residues) spans 454 to 467 (EEDDGDDDSDSDEE). Positions 629–668 (YEDFLSMEEELEQRKERESKKRQELLKKVDFSKLTLEQKE) form a coiled coil.

Its subcellular location is the endoplasmic reticulum. Functionally, involved in Golgi-to-endoplasmic reticulum (ER) retrograde transport; the function is proposed to depend on its association in the NRZ complex which is believed to play a role in SNARE assembly at the ER. Required for normal embryonic development. May play a role in the nonsense-mediated decay pathway of mRNAs containing premature stop codons. The polypeptide is NBAS subunit of NRZ tethering complex (Danio rerio (Zebrafish)).